A 231-amino-acid chain; its full sequence is Membrane protein YknW (231 aa).

A run of 5 helical transmembrane segments spans residues 38-58 (VWGP…LQSL), 93-113 (GAII…WLCV), 128-148 (LSLF…IVAF), 171-191 (LASV…LLAI), and 205-225 (WISA…SGLI).

As to quaternary structure, interacts with a complex composed of YknX, YknY and YknZ.

The protein localises to the cell membrane. Part of an unusual four-component transporter, which is required for protection against the killing factor SdpC (sporulation-delaying protein). Has a role in the assembly of the YknXYZ complex. The sequence is that of Membrane protein YknW (yknW) from Bacillus subtilis (strain 168).